Consider the following 62-residue polypeptide: [Ser6, Val10, Asp11]-phyllokinin (62 aa).

The signal sequence occupies residues 1-22 (MSFLKKSLLLVLFLGLVSFSIC). The propeptide occupies 23–51 (EEEKRETEEEENEDDMDEESEEKKRESPD). A disordered region spans residues 24-62 (EEKRETEEEENEDDMDEESEEKKRESPDRPPGFSPFRVD). Residues 30-42 (EEEENEDDMDEES) show a composition bias toward acidic residues.

Belongs to the frog skin active peptide (FSAP) family. Bradykinin-related peptide subfamily. Expressed by the skin glands.

Its subcellular location is the secreted. Functionally, induces relaxation of rat smooth muscle from tail artery and contraction of that from ileum, urinary bladder and uterus. Binds to both bradykinin receptor B1 (BDKRB1) and B2 (BDKRB2). This is [Ser6, Val10, Asp11]-phyllokinin from Agalychnis spurrelli (Gliding leaf frog).